We begin with the raw amino-acid sequence, 489 residues long: Glycogen synthase (489 aa).

An ADP-alpha-D-glucose-binding site is contributed by Arg20.

It belongs to the glycosyltransferase 1 family. Bacterial/plant glycogen synthase subfamily.

It carries out the reaction [(1-&gt;4)-alpha-D-glucosyl](n) + ADP-alpha-D-glucose = [(1-&gt;4)-alpha-D-glucosyl](n+1) + ADP + H(+). It functions in the pathway glycan biosynthesis; glycogen biosynthesis. In terms of biological role, synthesizes alpha-1,4-glucan chains using ADP-glucose. This is Glycogen synthase from Chlorobium phaeovibrioides (strain DSM 265 / 1930) (Prosthecochloris vibrioformis (strain DSM 265)).